A 563-amino-acid polypeptide reads, in one-letter code: Cystathionine gamma-synthase-like protein ankD (563 aa).

The segment at 1 to 37 (MGELGPASAQHGSDSISFSGSYTQPLGAPQPPNEPHA) is disordered. The span at 10–24 (QHGSDSISFSGSYTQ) shows a compositional bias: polar residues.

The protein belongs to the trans-sulfuration enzymes family. MET7 subfamily. Pyridoxal 5'-phosphate is required as a cofactor.

The catalysed reaction is cyclo(L-arginyl-(Z)-dehydro-3,4-dihydroxytyrosyl) + O-acetyl-L-homoserine = cyclo(L-arginyl-(Z)-dehydro-4-O-homoseryl-tyrosyl) + acetate + H(+). It functions in the pathway secondary metabolite biosynthesis. Cystathionine gamma-synthase-like protein; part of the ank cluster that mediates the biosynthesis of NK13650 C, a highly modified cyclo-arginine-tyrosine dipeptide. AnkD catalyzes the attachment of L-homoserine moiety using O-acetyl-L-homoserine as co-substrate. Within the pathway, the cyclodipeptide synthase ankA acts as the scaffold-generating enzyme and is responsible for formation of the cyclo-Arg-Tyr diketopiperazine (cRY) from L-Arg and L-Tyr. The ankA product cRY is desaturated by the cytochrome P450 monooxygenase ankB to yield a dehydro-cyclodipeptide intermediate. The FAD-dependent monooxygenase ankC then installs the m-OH, ankD catalyzes the attachment of L-homoserine, and ankE ligates citrate to the ankD product to yield NK13650 B. The O-methyltransferase ankF is responsible for methylation of the C-17 phenol group of NK13650 B to produce NK13650 D. Amidation of NK13650 D with L-Asp by ankG then leads to the production of NK13650 C, whereas amidation of NK13650 B produces NK13650 A. This Aspergillus thermomutatus (Neosartorya pseudofischeri) protein is Cystathionine gamma-synthase-like protein ankD.